A 224-amino-acid chain; its full sequence is Large ribosomal subunit protein uL3 (224 aa).

Glutamine 159 carries the N5-methylglutamine modification.

It belongs to the universal ribosomal protein uL3 family. As to quaternary structure, part of the 50S ribosomal subunit. Forms a cluster with proteins L14 and L19. Post-translationally, methylated by PrmB.

Functionally, one of the primary rRNA binding proteins, it binds directly near the 3'-end of the 23S rRNA, where it nucleates assembly of the 50S subunit. This is Large ribosomal subunit protein uL3 from Herminiimonas arsenicoxydans.